The primary structure comprises 233 residues: Aspartate/glutamate leucyltransferase (233 aa).

Belongs to the R-transferase family. Bpt subfamily.

It is found in the cytoplasm. The catalysed reaction is N-terminal L-glutamyl-[protein] + L-leucyl-tRNA(Leu) = N-terminal L-leucyl-L-glutamyl-[protein] + tRNA(Leu) + H(+). The enzyme catalyses N-terminal L-aspartyl-[protein] + L-leucyl-tRNA(Leu) = N-terminal L-leucyl-L-aspartyl-[protein] + tRNA(Leu) + H(+). Functions in the N-end rule pathway of protein degradation where it conjugates Leu from its aminoacyl-tRNA to the N-termini of proteins containing an N-terminal aspartate or glutamate. The sequence is that of Aspartate/glutamate leucyltransferase from Vibrio cholerae serotype O1 (strain ATCC 39541 / Classical Ogawa 395 / O395).